Reading from the N-terminus, the 302-residue chain is Protoheme IX farnesyltransferase (302 aa).

9 consecutive transmembrane segments (helical) span residues 27-47 (VLTL…QSIH), 48-68 (PVLG…AGAL), 97-117 (SALH…GLAL), 119-139 (VLAA…YTIW), 148-168 (IVIG…AATG), 176-196 (LLFA…ALFI), 219-239 (IQIM…WAMG), 240-260 (LTGA…LLLA), and 280-300 (LFGF…ADKV).

It belongs to the UbiA prenyltransferase family. Protoheme IX farnesyltransferase subfamily.

The protein resides in the cell inner membrane. The catalysed reaction is heme b + (2E,6E)-farnesyl diphosphate + H2O = Fe(II)-heme o + diphosphate. The protein operates within porphyrin-containing compound metabolism; heme O biosynthesis; heme O from protoheme: step 1/1. Converts heme B (protoheme IX) to heme O by substitution of the vinyl group on carbon 2 of heme B porphyrin ring with a hydroxyethyl farnesyl side group. This chain is Protoheme IX farnesyltransferase, found in Rhizorhabdus wittichii (strain DSM 6014 / CCUG 31198 / JCM 15750 / NBRC 105917 / EY 4224 / RW1) (Sphingomonas wittichii).